We begin with the raw amino-acid sequence, 291 residues long: MMRKSVRRAMLMTTACVSLLLASVPLCAQANDVQQKLAALEKSSGGRLGVALINTADNTQTLYRADERFAMCSTSKVMAVAAVLKQSETQKGLLSQRVEIKPSDLINYNPIAEKHVNGTMTFGELSAAALQYSDNTAMNKLIAHLGGPDKVTAFARTIGDDTFRLDRTEPTLNTAIPGDPRDTTTPLAMAQALRNLTLGNALGDTQRAQLVMWLKGNTTGAASIQAGLPTSWVVGDKTGSGGYGTTNDIAVIWPEGRAPLVLVTYFTQSEPKAESRRDVLAAAARIVTDGY.

Residues 1-30 form the signal peptide; that stretch reads MMRKSVRRAMLMTTACVSLLLASVPLCAQA. Residue serine 73 is the Nucleophile; acyl-ester intermediate of the active site. The a beta-lactam site is built by lysine 76, serine 133, glutamate 169, and serine 240.

This sequence belongs to the class-A beta-lactamase family. Monomer.

It localises to the secreted. It catalyses the reaction a beta-lactam + H2O = a substituted beta-amino acid. With respect to regulation, inhibited by the beta-lactamase-blocking agents clavulanic acid and tazobactam; in the DH10B strain. In terms of biological role, extended-spectrum beta-lactamase (ESBL) which confers resistance to penicillins, as well as first, second and third-generation cephalosporins. Has cefotaxime-hydrolyzing activity. Inactive against cephalosporin antibiotic, cefoxitin, and the carbapenem, imipenem. The sequence is that of Beta-lactamase CTX-M-25 from Escherichia coli.